Consider the following 309-residue polypeptide: Probable manganese-dependent inorganic pyrophosphatase (309 aa).

Mn(2+) contacts are provided by His-9, Asp-13, Asp-15, Asp-75, His-97, and Asp-149.

The protein belongs to the PPase class C family. Mn(2+) serves as cofactor.

The protein localises to the cytoplasm. The enzyme catalyses diphosphate + H2O = 2 phosphate + H(+). The sequence is that of Probable manganese-dependent inorganic pyrophosphatase from Lactiplantibacillus plantarum (strain ATCC BAA-793 / NCIMB 8826 / WCFS1) (Lactobacillus plantarum).